The chain runs to 176 residues: Translation initiation factor IF-3 (176 aa).

Belongs to the IF-3 family. As to quaternary structure, monomer.

Its subcellular location is the cytoplasm. In terms of biological role, IF-3 binds to the 30S ribosomal subunit and shifts the equilibrium between 70S ribosomes and their 50S and 30S subunits in favor of the free subunits, thus enhancing the availability of 30S subunits on which protein synthesis initiation begins. This chain is Translation initiation factor IF-3, found in Nitratidesulfovibrio vulgaris (strain ATCC 29579 / DSM 644 / CCUG 34227 / NCIMB 8303 / VKM B-1760 / Hildenborough) (Desulfovibrio vulgaris).